Consider the following 498-residue polypeptide: Protein flp (498 aa).

4 consecutive transmembrane segments (helical) span residues 6 to 26 (LYFL…IHIT), 389 to 409 (FNIV…FSAY), 433 to 453 (LTLC…YLIL), and 471 to 491 (LALI…LLFL).

The protein resides in the cell membrane. Its precise function is unknown. Has no penicillin-binding activity and is not involved in methicillin resistance. In Staphylococcus aureus (strain MW2), this protein is Protein flp (flp).